The sequence spans 27 residues: Defensin-like protein 2 (27 aa).

Gln-1 carries the post-translational modification Pyrrolidone carboxylic acid.

The protein belongs to the DEFL family. In terms of assembly, forms oligomers in its native state.

Possesses some antifungal activity sensitive to inorganic cations and antibacterial activity against B.megaterium. The sequence is that of Defensin-like protein 2 from Brassica campestris (Field mustard).